The primary structure comprises 144 residues: Deoxyuridine 5'-triphosphate nucleotidohydrolase (144 aa).

Residues 63-65, Asn76, 80-82, and Lys90 each bind substrate; these read RSG and TID.

The protein belongs to the dUTPase family. The cofactor is Mg(2+).

The catalysed reaction is dUTP + H2O = dUMP + diphosphate + H(+). It participates in pyrimidine metabolism; dUMP biosynthesis; dUMP from dCTP (dUTP route): step 2/2. This enzyme is involved in nucleotide metabolism: it produces dUMP, the immediate precursor of thymidine nucleotides and it decreases the intracellular concentration of dUTP so that uracil cannot be incorporated into DNA. The sequence is that of Deoxyuridine 5'-triphosphate nucleotidohydrolase from Hydrogenobaculum sp. (strain Y04AAS1).